The sequence spans 453 residues: Putative receptor-like protein kinase At2g30940 (453 aa).

A helical membrane pass occupies residues 60-80; it reads ASASIAFLLVLIISVLLCFIF. Position 155 is a phosphothreonine (threonine 155). Positions 166–428 constitute a Protein kinase domain; it reads FADDNVITKG…IHMLQPHDLL (263 aa). ATP is bound by residues 172-180 and lysine 194; that span reads ITKGDSSTV. Residue tyrosine 240 is modified to Phosphotyrosine. Catalysis depends on aspartate 293, which acts as the Proton acceptor. Serine 297 is modified (phosphoserine). Threonine 322 bears the Phosphothreonine mark.

Belongs to the protein kinase superfamily.

The protein resides in the cell membrane. It catalyses the reaction L-seryl-[protein] + ATP = O-phospho-L-seryl-[protein] + ADP + H(+). The enzyme catalyses L-threonyl-[protein] + ATP = O-phospho-L-threonyl-[protein] + ADP + H(+). The chain is Putative receptor-like protein kinase At2g30940 from Arabidopsis thaliana (Mouse-ear cress).